The chain runs to 293 residues: Acetyl-coenzyme A carboxylase carboxyl transferase subunit beta (293 aa).

A CoA carboxyltransferase N-terminal domain is found at 29–293 (LWRKCPRCEG…MGWPPLALDD (265 aa)). Zn(2+) contacts are provided by C33, C36, C52, and C55. A C4-type zinc finger spans residues 33 to 55 (CPRCEGVVYRPELDRNMDVCPKC).

Belongs to the AccD/PCCB family. As to quaternary structure, acetyl-CoA carboxylase is a heterohexamer composed of biotin carboxyl carrier protein (AccB), biotin carboxylase (AccC) and two subunits each of ACCase subunit alpha (AccA) and ACCase subunit beta (AccD). Zn(2+) serves as cofactor.

The protein resides in the cytoplasm. The catalysed reaction is N(6)-carboxybiotinyl-L-lysyl-[protein] + acetyl-CoA = N(6)-biotinyl-L-lysyl-[protein] + malonyl-CoA. It functions in the pathway lipid metabolism; malonyl-CoA biosynthesis; malonyl-CoA from acetyl-CoA: step 1/1. Component of the acetyl coenzyme A carboxylase (ACC) complex. Biotin carboxylase (BC) catalyzes the carboxylation of biotin on its carrier protein (BCCP) and then the CO(2) group is transferred by the transcarboxylase to acetyl-CoA to form malonyl-CoA. The sequence is that of Acetyl-coenzyme A carboxylase carboxyl transferase subunit beta from Alcanivorax borkumensis (strain ATCC 700651 / DSM 11573 / NCIMB 13689 / SK2).